The sequence spans 475 residues: MSPQTETKASVGFKAGVKDYKLTYYTPEYQTKDTDILAAFRVTPQPGVPPEEAGAAVAAESSTGTWTTVWTDGLTSLDRYKGRCYHIEPVAGEENQFIAYVAYPLDLFEEGSVTNMFTSIVGNVFGFKALRALRLEDLRVPPAYSKTFQGPPHGIQVERDKLNKYGRPLLGCTIKPKLGLSAKNYGRAVYECLRGGLDFTKDDENVNSQPFMRWRDRFVFCAEAIYKAQAETGEIKGHYLNATAGTCEEMIKRAVFARELGVPIVMHDYLTGGFTANTSLAHYCRDNGLLLHIHRAMHAVIDRQKNHGIHFRVLAKALRMSGGDHIHAGTVVGKLEGERDITLGFVDLLRDDFIEKDRSRGIYFTQDWVSLPGVLPVASGGIHVWHMPALTEIFGDDSVLQFGGGTLGHPWGNAPGAVANRVALEACVQARNEGRDLAREGNEIIREASKWSPELAAACEVWKEIKFEFPAMDTL.

The propeptide occupies 1–2 (MS). P3 carries the N-acetylproline modification. K14 is modified (N6,N6,N6-trimethyllysine). 2 residues coordinate substrate: N123 and T173. K175 serves as the catalytic Proton acceptor. K177 lines the substrate pocket. K201, D203, and E204 together coordinate Mg(2+). K201 carries the post-translational modification N6-carboxylysine. The Proton acceptor role is filled by H294. Substrate contacts are provided by R295, H327, and S379.

The protein belongs to the RuBisCO large chain family. Type I subfamily. In terms of assembly, heterohexadecamer of 8 large chains and 8 small chains; disulfide-linked. The disulfide link is formed within the large subunit homodimers. It depends on Mg(2+) as a cofactor. In terms of processing, the disulfide bond which can form in the large chain dimeric partners within the hexadecamer appears to be associated with oxidative stress and protein turnover.

The protein resides in the plastid. Its subcellular location is the chloroplast. The enzyme catalyses 2 (2R)-3-phosphoglycerate + 2 H(+) = D-ribulose 1,5-bisphosphate + CO2 + H2O. The catalysed reaction is D-ribulose 1,5-bisphosphate + O2 = 2-phosphoglycolate + (2R)-3-phosphoglycerate + 2 H(+). Functionally, ruBisCO catalyzes two reactions: the carboxylation of D-ribulose 1,5-bisphosphate, the primary event in carbon dioxide fixation, as well as the oxidative fragmentation of the pentose substrate in the photorespiration process. Both reactions occur simultaneously and in competition at the same active site. This is Ribulose bisphosphate carboxylase large chain from Buxus microphylla (Littleleaf boxwood).